The following is a 323-amino-acid chain: Transmembrane protein 171 (323 aa).

Transmembrane regions (helical) follow at residues 22-42 (IFFL…ISIF), 57-77 (MVLK…VILA), 112-132 (LIFG…GIWV), and 159-179 (FLSL…FFVV). The segment covering 251 to 268 (YSSLFNLSRTPTPENQGA) has biased composition (polar residues). Positions 251-323 (YSSLFNLSRT…LGAPSESSPP (73 aa)) are disordered. Over residues 281-290 (SGPGSSSESS) the composition is skewed to low complexity.

The protein localises to the membrane. This chain is Transmembrane protein 171 (Tmem171), found in Rattus norvegicus (Rat).